The sequence spans 429 residues: Serine--tRNA ligase (429 aa).

An L-serine-binding site is contributed by 229–231; the sequence is TAE. 260–262 serves as a coordination point for ATP; it reads RSE. An L-serine-binding site is contributed by E283. 347-350 serves as a coordination point for ATP; the sequence is EISS. S383 provides a ligand contact to L-serine.

Belongs to the class-II aminoacyl-tRNA synthetase family. Type-1 seryl-tRNA synthetase subfamily. Homodimer. The tRNA molecule binds across the dimer.

The protein localises to the cytoplasm. It catalyses the reaction tRNA(Ser) + L-serine + ATP = L-seryl-tRNA(Ser) + AMP + diphosphate + H(+). The enzyme catalyses tRNA(Sec) + L-serine + ATP = L-seryl-tRNA(Sec) + AMP + diphosphate + H(+). It functions in the pathway aminoacyl-tRNA biosynthesis; selenocysteinyl-tRNA(Sec) biosynthesis; L-seryl-tRNA(Sec) from L-serine and tRNA(Sec): step 1/1. Its function is as follows. Catalyzes the attachment of serine to tRNA(Ser). Is also able to aminoacylate tRNA(Sec) with serine, to form the misacylated tRNA L-seryl-tRNA(Sec), which will be further converted into selenocysteinyl-tRNA(Sec). This chain is Serine--tRNA ligase, found in Orientia tsutsugamushi (strain Boryong) (Rickettsia tsutsugamushi).